The following is a 440-amino-acid chain: Glycerophosphocholine cholinephosphodiesterase ENPP6 (440 aa).

The first 22 residues, 1-22 (MAVKLGTLLLALALGLAQPASA), serve as a signal peptide directing secretion. 3 residues coordinate substrate: Asp32, Ser71, and Asn92. 2 residues coordinate Zn(2+): Asp32 and Ser71. The active-site Nucleophile is the Ser71. Phosphoserine is present on Ser71. Asn100 and Asn118 each carry an N-linked (GlcNAc...) asparagine glycan. Cys142 and Cys154 are disulfide-bonded. Substrate is bound at residue Asp193. Positions 193, 197, 240, and 241 each coordinate Zn(2+). His241 is a binding site for substrate. The N-linked (GlcNAc...) asparagine glycan is linked to Asn341. A substrate-binding site is contributed by His354. Residue His354 coordinates Zn(2+). Asn404 carries N-linked (GlcNAc...) asparagine glycosylation. Ala418 carries GPI-anchor amidated alanine lipidation. Residues 419 to 440 (GTTPPVQPSHCALALILLFLLA) constitute a propeptide, removed in mature form.

It belongs to the nucleotide pyrophosphatase/phosphodiesterase family. Homodimer; disulfide-linked. Homotetramer. Zn(2+) serves as cofactor.

It localises to the cell membrane. The catalysed reaction is sn-glycerol 3-phosphocholine + H2O = phosphocholine + glycerol + H(+). It catalyses the reaction a 1-acyl-sn-glycero-3-phosphocholine + H2O = a 1-acyl-sn-glycerol + phosphocholine + H(+). The enzyme catalyses a 1-O-alkyl-sn-glycero-3-phosphocholine + H2O = a 1-O-alkyl-sn-glycerol + phosphocholine + H(+). It carries out the reaction 1-dodecanoyl-sn-glycero-3-phosphocholine + H2O = 1-dodecanoyl-sn-glycerol + phosphocholine + H(+). The catalysed reaction is 1-hexadecanoyl-sn-glycero-3-phosphocholine + H2O = 1-hexadecanoyl-sn-glycerol + phosphocholine + H(+). It catalyses the reaction 1-(5Z,8Z,11Z,14Z-eicosatetraenoyl)-sn-glycero-3-phosphocholine + H2O = 1-(5Z,8Z,11Z,14Z-eicosatetraenoyl)-sn-glycerol + phosphocholine + H(+). The enzyme catalyses 1-tetradecanoyl-sn-glycero-3-phosphocholine + H2O = 1-tetradecanoyl-sn-glycerol + phosphocholine + H(+). It carries out the reaction sphing-4-enine-phosphocholine + H2O = sphing-4-enine + phosphocholine + H(+). The catalysed reaction is 1-(9Z-octadecenoyl)-sn-glycero-3-phosphocholine + H2O = 1-(9Z-octadecenoyl)-sn-glycerol + phosphocholine + H(+). It catalyses the reaction 1-(9Z,12Z)-octadecadienoyl-sn-glycero-3-phosphocholine + H2O = 1-(9Z,12Z-octadecadienoyl)-sn-glycerol + phosphocholine + H(+). The enzyme catalyses glycero-2-phosphocholine + H2O = phosphocholine + glycerol + H(+). With respect to regulation, inhibited by EDTA and EGTA in vitro. Functionally, choline-specific glycerophosphodiesterase that hydrolyzes glycerophosphocholine (GPC) and lysophosphatidylcholine (LPC) and contributes to supplying choline to the cells. Has a preference for LPC with short (12:0 and 14:0) or polyunsaturated (18:2 and 20:4) fatty acids. In vitro, hydrolyzes only choline-containing lysophospholipids, such as sphingosylphosphorylcholine (SPC), platelet-activating factor (PAF) and lysoPAF, but not other lysophospholipids. The polypeptide is Glycerophosphocholine cholinephosphodiesterase ENPP6 (Pongo abelii (Sumatran orangutan)).